The following is a 338-amino-acid chain: uncharacterized protein (338 aa).

The Radical SAM core domain maps to 111–334 (HLGEERVLVP…LELAEKYNLD (224 aa)). Residues Cys-129, Cys-133, and Cys-136 each contribute to the [4Fe-4S] cluster site.

Requires [4Fe-4S] cluster as cofactor.

This is an uncharacterized protein from Methanocaldococcus jannaschii (strain ATCC 43067 / DSM 2661 / JAL-1 / JCM 10045 / NBRC 100440) (Methanococcus jannaschii).